Here is a 130-residue protein sequence, read N- to C-terminus: Small ribosomal subunit protein uS8 (130 aa).

Belongs to the universal ribosomal protein uS8 family. In terms of assembly, part of the 30S ribosomal subunit. Contacts proteins S5 and S12.

Its function is as follows. One of the primary rRNA binding proteins, it binds directly to 16S rRNA central domain where it helps coordinate assembly of the platform of the 30S subunit. In Enterobacter sp. (strain 638), this protein is Small ribosomal subunit protein uS8.